The primary structure comprises 855 residues: Pre-mRNA-splicing factor SYF1 (855 aa).

9 HAT repeats span residues 15–47 (LVFE…FKQG), 48–80 (APKP…ARRA), 90–122 (PAYE…FLMD), 124–158 (GRVT…FLRS), 160–192 (PLPE…SSDR), 198–230 (QRLA…LISQ), 235–268 (VQSL…YYIR), 270–305 (GHFE…FEES), and 369–407 (GRPR…FYED). N6-acetyllysine is present on K420. 5 HAT repeats span residues 498-530 (GTFQ…FLEE), 532-566 (KYFE…KFIS), 571-605 (RKLE…LEEE), 643-677 (YGVT…MECK), and 679-713 (GEID…FEVR). Residues 808 to 855 (AELAQQANPEEIQLGEDEDEDEMDLEPNEVRLEQQSVPAAVFGSLKED) form a disordered region. The span at 820–834 (QLGEDEDEDEMDLEP) shows a compositional bias: acidic residues. Residue S851 is modified to Phosphoserine.

This sequence belongs to the crooked-neck family. Associates with RNA polymerase II, the TCR-specific proteins CKN1/CSA and ERCC6/CSB, and XPA. Identified in the spliceosome C complex. Component of the XAB2 complex, a multimeric protein complex composed of XAB2, PRPF19, AQR, ZNF830, ISY1, and PPIE. Identified in a pentameric intron-binding (IB) complex composed of AQR, XAB2, ISY1, ZNF830 and PPIE that is incorporated into the spliceosome as a preassembled complex. The IB complex does not contain PRPF19.

It is found in the nucleus. Functionally, involved in pre-mRNA splicing as component of the spliceosome. Involved in transcription-coupled repair (TCR), transcription and pre-mRNA splicing. This Mus musculus (Mouse) protein is Pre-mRNA-splicing factor SYF1 (Xab2).